Here is a 460-residue protein sequence, read N- to C-terminus: Serine incorporator 5 (460 aa).

The Extracellular portion of the chain corresponds to 1 to 36; that stretch reads MSARCCAGQLACCCGSAGCALCCGCCPKFRQSRSTR. A helical membrane pass occupies residues 37–57; the sequence is FMYLFYFTLVIIPCCVMMSPS. At 58 to 89 the chain is on the cytoplasmic side; it reads VMKQMTEHIPFFEDFCKGIKAGDTCENLVGYS. The helical transmembrane segment at 90–110 threads the bilayer; the sequence is AVYRVCFGMACFFFVFCVLTF. Residues 111–124 lie on the Extracellular side of the membrane; it reads KVNNSKSCRASIHN. N-linked (GlcNAc...) asparagine glycosylation is present at Asn113. Residues 125–145 traverse the membrane as a helical segment; the sequence is GFWFFKLLLLGAMCSGAFFIP. The Cytoplasmic portion of the chain corresponds to 146–156; the sequence is DQETFLNVWRY. The chain crosses the membrane as a helical span at residues 157–177; that stretch reads VGAVGSFFFICIQLLLIVEFA. At 178-197 the chain is on the extracellular side; the sequence is HKWNKNWTAGTVRNKLWYAS. A glycan (N-linked (GlcNAc...) asparagine) is linked at Asn183. A helical transmembrane segment spans residues 198–218; that stretch reads LSLALIMYSIAVGGLALMAVF. At 219 to 229 the chain is on the cytoplasmic side; sequence YTQWDDCMDNK. Residues 230–250 form a helical membrane-spanning segment; that stretch reads ILLGVHGGLCVLISLAAISPC. Over 251-258 the chain is Extracellular; it reads VQNRQPHS. A helical membrane pass occupies residues 259–279; that stretch reads GLLQPGLISCYVTYLTFSALT. Residues 280–309 are Cytoplasmic-facing; the sequence is SKPEKVVKDEHGKNVTICVPDFGQDFRRDE. Residues 310–330 traverse the membrane as a helical segment; the sequence is SMVTWLGTLLLVVCISYSCLT. At 331–390 the chain is on the extracellular side; the sequence is STTRSSSDALQRRYGAPELEVARCCFCFGPDGEDTEEQQNVKEGPRVIYDEKKGTVYSYS. A helical membrane pass occupies residues 391 to 411; that stretch reads YFHFVLLLASLYVMMTLTSWF. Topologically, residues 412 to 427 are cytoplasmic; sequence HYENATIETFFVGSWS. Residues 428–448 traverse the membrane as a helical segment; sequence IFWVKMASCWMCVLLYLWTLV. The Extracellular portion of the chain corresponds to 449-460; it reads APLCCPSRQFSV.

The protein belongs to the TDE1 family. Brain. Expressed at high levels in the white matter and the oligodendroglial cells of the brain. Expressed at low levels in the liver.

Its subcellular location is the cell membrane. The enzyme catalyses a 1,2-diacyl-sn-glycero-3-phospho-L-serine(in) = a 1,2-diacyl-sn-glycero-3-phospho-L-serine(out). It catalyses the reaction a 1,2-diacyl-sn-glycero-3-phosphocholine(in) = a 1,2-diacyl-sn-glycero-3-phosphocholine(out). It carries out the reaction a 1,2-diacyl-sn-glycero-3-phosphoethanolamine(in) = a 1,2-diacyl-sn-glycero-3-phosphoethanolamine(out). Restriction factor required to restrict infectivity of gammaretroviruses: acts by inhibiting an early step of viral infection. Impairs the penetration of the viral particle into the cytoplasm. Non-ATP-dependent, non-specific lipid transporter for phosphatidylserine, phosphatidylcholine, and phosphatidylethanolamine. Functions as a scramblase that flips lipids in both directions across the membrane. Phospholipid scrambling results in gammaretroviral surface exposure of phosphatidylserine and loss of membrane asymmetry, which leads to loss of infectivity. Enhances the incorporation of serine into phosphatidylserine and sphingolipids. May play a role in providing serine molecules for the formation of myelin glycosphingolipids in oligodendrocytes. In Rattus norvegicus (Rat), this protein is Serine incorporator 5 (Serinc5).